We begin with the raw amino-acid sequence, 338 residues long: Eukaryotic translation initiation factor 3 subunit H (338 aa).

Residues 22 to 154 enclose the MPN domain; the sequence is VQCDGLAVMK…LKAYRLTPQA (133 aa).

This sequence belongs to the eIF-3 subunit H family. As to quaternary structure, component of the eukaryotic translation initiation factor 3 (eIF-3) complex. The eIF-3 complex interacts with pix. Interacts with mxt.

It is found in the cytoplasm. Component of the eukaryotic translation initiation factor 3 (eIF-3) complex, which is involved in protein synthesis of a specialized repertoire of mRNAs and, together with other initiation factors, stimulates binding of mRNA and methionyl-tRNAi to the 40S ribosome. The eIF-3 complex specifically targets and initiates translation of a subset of mRNAs involved in cell proliferation. This Drosophila erecta (Fruit fly) protein is Eukaryotic translation initiation factor 3 subunit H.